Consider the following 613-residue polypeptide: Portal protein (613 aa).

Residues 577–613 (ATGGDHGIRQAPSARGDTEPDHAKSKPARDPPPGAGS) form a disordered region. Over residues 592-605 (GDTEPDHAKSKPAR) the composition is skewed to basic and acidic residues.

It belongs to the herpesviridae portal protein family. Homododecamerizes. Interacts with terminase subunits TRM1 and TRM3.

It is found in the virion. Its subcellular location is the host nucleus. The protein resides in the host cytoplasm. Forms a portal in the viral capsid through which viral DNA is translocated during DNA packaging. Assembles as a dodecamer at a single fivefold axe of the T=16 icosahedric capsid. Binds to the molecular motor that translocates the viral DNA, termed terminase. The chain is Portal protein from Epstein-Barr virus (strain B95-8) (HHV-4).